The following is a 625-amino-acid chain: Alpha-protein kinase vwkA (625 aa).

Residues 1 to 15 (MESKYVLSTEKESKT) are compositionally biased toward basic and acidic residues. A disordered region spans residues 1 to 64 (MESKYVLSTE…GLSSGGSKTH (64 aa)). Composition is skewed to polar residues over residues 25-39 (DMDS…TSLG) and 46-63 (SLKT…GSKT). Residues 87 to 114 (TKDSITLAKEKEKKIEKRNEEIKLTFKA) adopt a coiled-coil conformation. The VWFA domain maps to 122-322 (DLLFIVDCTG…KMNERIFISI (201 aa)). The Alpha-type protein kinase domain maps to 386–600 (TCLSSSYEMK…HCKKLGLTIP (215 aa)). 570–576 (GSCNLGK) lines the ATP pocket. The segment at 602-625 (FTSSSSTSSSSRSTSSSSSISYSY) is disordered.

It belongs to the protein kinase superfamily. Alpha-type protein kinase family. ALPK subfamily. As to quaternary structure, interacts with calmodulin; in the presence of calcium. Autophosphorylated, in vitro.

The protein resides in the cytoplasm. It localises to the cytosol. Its subcellular location is the perinuclear region. It is found in the contractile vacuole membrane. It catalyses the reaction L-seryl-[protein] + ATP = O-phospho-L-seryl-[protein] + ADP + H(+). The catalysed reaction is L-threonyl-[protein] + ATP = O-phospho-L-threonyl-[protein] + ADP + H(+). Its activity is regulated as follows. Autophosphorylation activity enhanced by calcium/calmodulin. In terms of biological role, displays a modest preference for threonine over serine residues. Does not phosphorylate myosin II, however can phosphorylate MBP, in vitro. May be involved in the regulation of myosin II function during cytokinesis. Overexpression leads to impaired cell proliferation in suspension culture and fails to develop beyond the mound stage. Both overexpression and absence of the gene can result in defects in cytokinesis and alterations in myosin II abundance and assembly. This is Alpha-protein kinase vwkA (vwkA) from Dictyostelium discoideum (Social amoeba).